The primary structure comprises 208 residues: Ribosomal RNA small subunit methyltransferase G (208 aa).

Residues glycine 75, leucine 80, 126-127 (VE), and arginine 141 contribute to the S-adenosyl-L-methionine site.

It belongs to the methyltransferase superfamily. RNA methyltransferase RsmG family.

It localises to the cytoplasm. The enzyme catalyses guanosine(527) in 16S rRNA + S-adenosyl-L-methionine = N(7)-methylguanosine(527) in 16S rRNA + S-adenosyl-L-homocysteine. Functionally, specifically methylates the N7 position of guanine in position 527 of 16S rRNA. The protein is Ribosomal RNA small subunit methyltransferase G of Marinomonas sp. (strain MWYL1).